Here is a 567-residue protein sequence, read N- to C-terminus: Proline--tRNA ligase (567 aa).

The protein belongs to the class-II aminoacyl-tRNA synthetase family. ProS type 1 subfamily. Homodimer.

The protein resides in the cytoplasm. It catalyses the reaction tRNA(Pro) + L-proline + ATP = L-prolyl-tRNA(Pro) + AMP + diphosphate. Its function is as follows. Catalyzes the attachment of proline to tRNA(Pro) in a two-step reaction: proline is first activated by ATP to form Pro-AMP and then transferred to the acceptor end of tRNA(Pro). As ProRS can inadvertently accommodate and process non-cognate amino acids such as alanine and cysteine, to avoid such errors it has two additional distinct editing activities against alanine. One activity is designated as 'pretransfer' editing and involves the tRNA(Pro)-independent hydrolysis of activated Ala-AMP. The other activity is designated 'posttransfer' editing and involves deacylation of mischarged Ala-tRNA(Pro). The misacylated Cys-tRNA(Pro) is not edited by ProRS. This chain is Proline--tRNA ligase, found in Staphylococcus aureus (strain USA300).